Reading from the N-terminus, the 132-residue chain is Small ribosomal subunit protein uS8 (132 aa).

It belongs to the universal ribosomal protein uS8 family. In terms of assembly, part of the 30S ribosomal subunit. Contacts proteins S5 and S12.

Functionally, one of the primary rRNA binding proteins, it binds directly to 16S rRNA central domain where it helps coordinate assembly of the platform of the 30S subunit. This is Small ribosomal subunit protein uS8 from Geotalea daltonii (strain DSM 22248 / JCM 15807 / FRC-32) (Geobacter daltonii).